A 259-amino-acid chain; its full sequence is Cobalt transport protein CbiM (259 aa).

An N-terminal signal peptide occupies residues 1 to 25 (MFRRTTWLTLYLLLAMAALARPAFA). The next 6 helical transmembrane spans lie at 31-51 (GFLPFNWAAFWFIVVLPFWIW), 68-88 (MLLGLAGAYTFVLSALKLPSV), 100-120 (LGAVLFGPAAMSILGGIVLLF), 132-152 (TLGANTFSMAVVGPFVAYGLY), 160-180 (GSMPLAVFLAATLGDLMTYVT), and 206-226 (IFAVTQLPLAISEGFLTVIVF).

It belongs to the CbiM family. As to quaternary structure, forms an energy-coupling factor (ECF) transporter complex composed of an ATP-binding protein (A component, CbiO), a transmembrane protein (T component, CbiQ) and 2 possible substrate-capture proteins (S components, CbiM and CbiN) of unknown stoichimetry.

The protein localises to the cell membrane. It functions in the pathway cofactor biosynthesis; adenosylcobalamin biosynthesis. Functionally, part of the energy-coupling factor (ECF) transporter complex CbiMNOQ involved in cobalt import. This Moorella thermoacetica (strain ATCC 39073 / JCM 9320) protein is Cobalt transport protein CbiM.